A 43-amino-acid chain; its full sequence is METATIIVIFVSSLLLGITAYSIYTAFGPAAKNLRDPFEEHED.

The helical transmembrane segment at 4 to 24 (ATIIVIFVSSLLLGITAYSIY) threads the bilayer.

This sequence belongs to the PsbN family.

It localises to the plastid. It is found in the chloroplast thylakoid membrane. May play a role in photosystem I and II biogenesis. The polypeptide is Protein PsbN (Trieres chinensis (Marine centric diatom)).